Reading from the N-terminus, the 964-residue chain is MTVVLFATEYDTPNIVVNMLSETPTEHHLFPLMIKYKPSNRIEFVLQTQRCPDSTRVRPVFICDARRLSLSEYVSTNTPLPARVICAGIDADATRELYEHLFDRKKDETGHDEENGSAARHLFSNLTSTLKCLVHYNRSAILRYLNNTFLSPTFPSWFLSTYGTHEGTLILTMSYYLFERTYSTIQTTRDYTKCFTADPGRNLFTYINMRDFMATMNGSRFRKQTVLFAVFAKARNARDRCELEYVDAKINAFREESRLAADSCVYYVYLAYRTALCREKFLQYCEHTAYDKNLPDDQQCAAEENYLGRSLDAELISIMNTYFSVEGYFGSYIHVDRAKLSPPHSYRGYDWNTEADTMVGYSSTATNLAISLRKLNSTCESLFSPLPPTLMGLLKLCASDRYVPRAEKSRKRTSGGREKEDETRVCRRNYLLNDTSRPIGPMPVFRVEMPEKRHVFCAVSAENWTRRLLPKDLMKNLPSEYVSDECLTDAVWLREDIAALCEVGEQLYRTRHEMFNENLPVFNFVGDVDLKLREDLQGLSRQEVFDLCRALRRTLIGAWRHLFPEVDPDSHPVFFFKSACPQNAAGAADEAMLYGGGGYDEDDDPRPEHAAAMVDYGDAVRRPPFCVCRRKLGLRVIIPFPPRTAAIGAQTLKRLAGILDHTLCLDRDLVCKLNAISHPGECFDTGIYSHGRSIRMPLMYKLDEASGLILHSRLNPIFIVPAGYRDRPAEFVLQQLCPQNLTHHGRPPQRDGSADQLTEVVLHITDRACADSDGNFLQSRARRAMSSGRLPLGPLLRAHLSLESGQSAPSLPTLVGRGGGGEGGASSDYEEERAVGSDEEEDDDDVENLQAFARRIAWPALLRHTRNHYREEVQQQLEAATVFTAVGRTCVAVKRGLYGRARDFSCLARETYTRQETVQVFLDIRGDQRRNVWATLWSRCFTRRCNSNAKQTHLSLKISLPSQY.

The disordered stretch occupies residues 807-844 (SAPSLPTLVGRGGGGEGGASSDYEEERAVGSDEEEDDD).

It belongs to the herpesviridae DNA primase family. In terms of assembly, associates with the helicase and the primase-associated factor to form the helicase-primase factor.

It is found in the host nucleus. Essential component of the helicase/primase complex. Unwinds the DNA at the replication forks and generates single-stranded DNA for both leading and lagging strand synthesis. The primase initiates primer synthesis and thereby produces large amount of short RNA primers on the lagging strand that the polymerase elongates using dNTPs. This chain is DNA primase (UL70), found in Mus musculus (Mouse).